The chain runs to 190 residues: Transcription antitermination protein NusB (190 aa).

The tract at residues 135–190 is disordered; it reads APAPESVAEEADEESSDSAAAASEPTDEGDVSDSPDSSGASDEPAAPSAEIQPTVD. Acidic residues predominate over residues 141-150; the sequence is VAEEADEESS.

Belongs to the NusB family.

In terms of biological role, involved in transcription antitermination. Required for transcription of ribosomal RNA (rRNA) genes. Binds specifically to the boxA antiterminator sequence of the ribosomal RNA (rrn) operons. The polypeptide is Transcription antitermination protein NusB (Bifidobacterium longum (strain DJO10A)).